A 250-amino-acid chain; its full sequence is 1-(5-phosphoribosyl)-5-[(5-phosphoribosylamino)methylideneamino] imidazole-4-carboxamide isomerase (250 aa).

The active-site Proton acceptor is Asp10. The Proton donor role is filled by Asp131.

This sequence belongs to the HisA/HisF family.

It localises to the cytoplasm. The enzyme catalyses 1-(5-phospho-beta-D-ribosyl)-5-[(5-phospho-beta-D-ribosylamino)methylideneamino]imidazole-4-carboxamide = 5-[(5-phospho-1-deoxy-D-ribulos-1-ylimino)methylamino]-1-(5-phospho-beta-D-ribosyl)imidazole-4-carboxamide. Its pathway is amino-acid biosynthesis; L-histidine biosynthesis; L-histidine from 5-phospho-alpha-D-ribose 1-diphosphate: step 4/9. The polypeptide is 1-(5-phosphoribosyl)-5-[(5-phosphoribosylamino)methylideneamino] imidazole-4-carboxamide isomerase (Desulfitobacterium hafniense (strain DSM 10664 / DCB-2)).